The following is a 639-amino-acid chain: 3D-(3,5/4)-trihydroxycyclohexane-1,2-dione hydrolase (639 aa).

Glu62 is a binding site for thiamine diphosphate. The tract at residues 438 to 518 (SLPGDLQRMW…INILLFDNCG (81 aa)) is thiamine pyrophosphate binding. Mg(2+) contacts are provided by Asp489 and Asn516.

It belongs to the TPP enzyme family. The cofactor is Mg(2+). Thiamine diphosphate is required as a cofactor.

The enzyme catalyses 3D-3,5/4-trihydroxycyclohexane-1,2-dione + H2O = 5-deoxy-D-glucuronate + H(+). It participates in polyol metabolism; myo-inositol degradation into acetyl-CoA; acetyl-CoA from myo-inositol: step 3/7. Functionally, involved in the cleavage of the C1-C2 bond of 3D-(3,5/4)-trihydroxycyclohexane-1,2-dione (THcHDO) to yield 5-deoxy-glucuronate (5DG). The chain is 3D-(3,5/4)-trihydroxycyclohexane-1,2-dione hydrolase from Clostridium perfringens (strain ATCC 13124 / DSM 756 / JCM 1290 / NCIMB 6125 / NCTC 8237 / Type A).